A 186-amino-acid chain; its full sequence is Elongation factor P (186 aa).

This sequence belongs to the elongation factor P family.

It is found in the cytoplasm. Its pathway is protein biosynthesis; polypeptide chain elongation. Involved in peptide bond synthesis. Stimulates efficient translation and peptide-bond synthesis on native or reconstituted 70S ribosomes in vitro. Probably functions indirectly by altering the affinity of the ribosome for aminoacyl-tRNA, thus increasing their reactivity as acceptors for peptidyl transferase. This is Elongation factor P from Prochlorococcus marinus (strain MIT 9301).